A 106-amino-acid chain; its full sequence is MIISTTSQLEGRPIAEYLGVVSSESVQGIYFVRDFFARFRDFFGGRSQTLESALREAREQATEELKARARQLQADAVVGVDFEISMPSVQGGMVVVFATGTAVRLK.

The protein belongs to the UPF0145 family.

This is UPF0145 protein PP_2873 from Pseudomonas putida (strain ATCC 47054 / DSM 6125 / CFBP 8728 / NCIMB 11950 / KT2440).